We begin with the raw amino-acid sequence, 429 residues long: Enolase (429 aa).

Residue Q169 coordinates (2R)-2-phosphoglycerate. E211 functions as the Proton donor in the catalytic mechanism. The Mg(2+) site is built by D248, E289, and D316. K341, R370, S371, and K392 together coordinate (2R)-2-phosphoglycerate. K341 acts as the Proton acceptor in catalysis.

This sequence belongs to the enolase family. Mg(2+) serves as cofactor.

The protein localises to the cytoplasm. It localises to the secreted. Its subcellular location is the cell surface. It carries out the reaction (2R)-2-phosphoglycerate = phosphoenolpyruvate + H2O. It functions in the pathway carbohydrate degradation; glycolysis; pyruvate from D-glyceraldehyde 3-phosphate: step 4/5. Its function is as follows. Catalyzes the reversible conversion of 2-phosphoglycerate (2-PG) into phosphoenolpyruvate (PEP). It is essential for the degradation of carbohydrates via glycolysis. The protein is Enolase of Anaplasma phagocytophilum (strain HZ).